Consider the following 286-residue polypeptide: tRNA (guanine-N(1)-)-methyltransferase (286 aa).

Residues G116 and 140 to 145 (IGDYVL) each bind S-adenosyl-L-methionine. A disordered region spans residues 232–286 (DALPPGSLTPHEEALAAEARLHAGRSAETPPPAGAAGSQAEGPPGTSPSDAAVAH).

It belongs to the RNA methyltransferase TrmD family. In terms of assembly, homodimer.

The protein resides in the cytoplasm. The enzyme catalyses guanosine(37) in tRNA + S-adenosyl-L-methionine = N(1)-methylguanosine(37) in tRNA + S-adenosyl-L-homocysteine + H(+). Its function is as follows. Specifically methylates guanosine-37 in various tRNAs. In Acidothermus cellulolyticus (strain ATCC 43068 / DSM 8971 / 11B), this protein is tRNA (guanine-N(1)-)-methyltransferase.